The chain runs to 1642 residues: Cholesterol transporter ABCA5 (1642 aa).

The chain crosses the membrane as a helical span at residues Ser32–Met52. An N-linked (GlcNAc...) asparagine glycan is attached at Asn86. 5 helical membrane-spanning segments follow: residues Val220–Ile240, Leu264–Ile284, Ile297–Leu317, Gly328–Ile348, and Leu355–Met375. Asn388 carries N-linked (GlcNAc...) asparagine glycosylation. The helical transmembrane segment at Leu396 to Tyr416 threads the bilayer. An N-linked (GlcNAc...) asparagine glycan is attached at Asn458. Residues Ile478–Tyr713 form the ABC transporter 1 domain. ATP is bound at residue Gly514–Ser521. The helical transmembrane segment at Ala864 to His884 threads the bilayer. A glycan (N-linked (GlcNAc...) asparagine) is linked at Asn919. Residues Val967–Ile987 form a helical membrane-spanning segment. An N-linked (GlcNAc...) asparagine glycan is attached at Asn996. 6 consecutive transmembrane segments (helical) span residues Leu1021–Met1041, Val1071–Phe1091, Phe1102–Ile1122, Ser1138–Leu1158, Ala1164–Ile1184, and Leu1207–His1227. An ABC transporter 2 domain is found at Ile1290–Lys1533. Gly1333–Ser1340 lines the ATP pocket.

It belongs to the ABC transporter superfamily. ABCA family. In terms of processing, N-glycosylated. As to expression, expressed in cardiomyocytes, oligodendrocytes and astrocytes in brain, alveolar type 2 cells in lung and follicular cells in the thyroid gland (at protein level). Detected in brain, testis, lung, heart, liver, kidney, skeletal muscle and placenta. Strongly expressed in the basal cells of the seminiferous tubules, interstitial cells consisting of Leydig cells, as well as the tunica albuginea. In the epididymis, specifically and very strongly expressed in the connective tissue outlining the cylindrical epithelium in the corpus and cauda regions, including fibrocytes and smooth muscle cells, as well as within the basal and tall columnar cells of the corpus cylindrical epithelium. Highly expressed in the brain with high expression in cortical and hippocampal neurons and moderately in the lung.

It localises to the golgi apparatus membrane. The protein localises to the lysosome membrane. Its subcellular location is the late endosome membrane. The protein resides in the cell membrane. It catalyses the reaction cholesterol(in) + ATP + H2O = cholesterol(out) + ADP + phosphate + H(+). In terms of biological role, cholesterol efflux transporter in macrophages that is responsible for APOAI/high-density lipoproteins (HDL) formation at the plasma membrane under high cholesterol levels and participates in reverse cholesterol transport. May play a role in the processing of autolysosomes. The polypeptide is Cholesterol transporter ABCA5 (Mus musculus (Mouse)).